The following is a 441-amino-acid chain: Phenoloxidase-activating enzyme (441 aa).

The N-terminal stretch at 1 to 21 (MFLIWTFIVAVLAIQTKSVVA) is a signal peptide. Q22 carries the pyrrolidone carboxylic acid modification. Clip domains follow at residues 23–76 (SCRT…AVCC) and 77–127 (PCNA…SICC). 8 disulfide bridges follow: C24–C75, C34–C65, C40–C76, C78–C126, C88–C117, C94–C127, C164–C305, and C203–C219. In terms of domain architecture, Peptidase S1 spans 174–440 (IVGGAPASID…YLPWIQNTIE (267 aa)). Catalysis depends on H218, which acts as the Charge relay system. 4 residues coordinate Ca(2+): E237, N239, N242, and D246. The N-linked (GlcNAc...) asparagine glycan is linked to N239. D285 (charge relay system) is an active-site residue. The N-linked (GlcNAc...) asparagine glycan is linked to N334. 2 disulfides stabilise this stretch: C356–C377 and C387–C416. S391 (charge relay system) is an active-site residue.

The protein belongs to the peptidase S1 family. CLIP subfamily. In the active form, heterodimer of a light chain and a heavy chain; disulfide-linked. Proteolytically cleaved for activation. Cleavage produces a light chain and a catalytic heavy chain which remains covalently associated probably through an interchain disulfide bond. In terms of processing, glycosylated.

With respect to regulation, stabilized by calcium. Inhibited by di-isopropyl phosphorofluoridate (DFP), phenylmethanesulfonylfluoride (PMSF), p-nitrophenyl-p'-guanidinobenzonate (p-NPGB), p-chloromercuribenzoate (PCMB), ethylenediaminetetraacetic acid (EDTA), urea and CI-13c. In terms of biological role, endopeptidase with selective post-Arg cleavage site. Activates prophenoloxidase. Has a probable role in the melanization process as part of the innate immune response. The polypeptide is Phenoloxidase-activating enzyme (Bombyx mori (Silk moth)).